A 211-amino-acid polypeptide reads, in one-letter code: 3-demethoxyubiquinol 3-hydroxylase (211 aa).

Residues glutamate 60, glutamate 90, histidine 93, glutamate 142, glutamate 174, and histidine 177 each contribute to the Fe cation site.

It belongs to the COQ7 family. Fe cation serves as cofactor.

The protein resides in the cell membrane. It catalyses the reaction a 5-methoxy-2-methyl-3-(all-trans-polyprenyl)benzene-1,4-diol + AH2 + O2 = a 3-demethylubiquinol + A + H2O. It functions in the pathway cofactor biosynthesis; ubiquinone biosynthesis. Its function is as follows. Catalyzes the hydroxylation of 2-nonaprenyl-3-methyl-6-methoxy-1,4-benzoquinol during ubiquinone biosynthesis. The chain is 3-demethoxyubiquinol 3-hydroxylase from Francisella tularensis subsp. tularensis (strain FSC 198).